The chain runs to 489 residues: Ketol-acid reductoisomerase (NADP(+)) (489 aa).

The KARI N-terminal Rossmann domain maps to 16–207 (LRKCKLVEKN…GSHRAGVLHS (192 aa)). NADP(+) is bound by residues 44-47 (CGSQ), arginine 67, serine 77, and 107-109 (DKQ). Residue histidine 131 is part of the active site. Glycine 157 serves as a coordination point for NADP(+). KARI C-terminal knotted domains are found at residues 208–343 (SFIA…KCKI) and 344–483 (CHKE…MVDM). The Mg(2+) site is built by aspartate 216, glutamate 220, glutamate 388, and glutamate 392. Position 413 (serine 413) interacts with substrate.

Belongs to the ketol-acid reductoisomerase family. Requires Mg(2+) as cofactor.

The enzyme catalyses (2R)-2,3-dihydroxy-3-methylbutanoate + NADP(+) = (2S)-2-acetolactate + NADPH + H(+). It catalyses the reaction (2R,3R)-2,3-dihydroxy-3-methylpentanoate + NADP(+) = (S)-2-ethyl-2-hydroxy-3-oxobutanoate + NADPH + H(+). It participates in amino-acid biosynthesis; L-isoleucine biosynthesis; L-isoleucine from 2-oxobutanoate: step 2/4. The protein operates within amino-acid biosynthesis; L-valine biosynthesis; L-valine from pyruvate: step 2/4. Its function is as follows. Involved in the biosynthesis of branched-chain amino acids (BCAA). Catalyzes an alkyl-migration followed by a ketol-acid reduction of (S)-2-acetolactate (S2AL) to yield (R)-2,3-dihydroxy-isovalerate. In the isomerase reaction, S2AL is rearranged via a Mg-dependent methyl migration to produce 3-hydroxy-3-methyl-2-ketobutyrate (HMKB). In the reductase reaction, this 2-ketoacid undergoes a metal-dependent reduction by NADPH to yield (R)-2,3-dihydroxy-isovalerate. The polypeptide is Ketol-acid reductoisomerase (NADP(+)) (Buchnera aphidicola subsp. Schlechtendalia chinensis).